The sequence spans 250 residues: Triosephosphate isomerase (250 aa).

9–11 is a binding site for substrate; the sequence is NWK. The active-site Electrophile is the histidine 94. Glutamate 166 acts as the Proton acceptor in catalysis. Residues glycine 172, serine 212, and 233-234 contribute to the substrate site; that span reads GG.

Belongs to the triosephosphate isomerase family. In terms of assembly, homodimer.

It is found in the cytoplasm. The catalysed reaction is D-glyceraldehyde 3-phosphate = dihydroxyacetone phosphate. The protein operates within carbohydrate biosynthesis; gluconeogenesis. Its pathway is carbohydrate degradation; glycolysis; D-glyceraldehyde 3-phosphate from glycerone phosphate: step 1/1. Involved in the gluconeogenesis. Catalyzes stereospecifically the conversion of dihydroxyacetone phosphate (DHAP) to D-glyceraldehyde-3-phosphate (G3P). The polypeptide is Triosephosphate isomerase (Thermus thermophilus (strain ATCC 27634 / DSM 579 / HB8)).